The sequence spans 392 residues: Cyclic di-GMP phosphodiesterase RocR (392 aa).

In terms of domain architecture, Response regulatory spans 5-126 (NVLVLEDEPF…RITALLTRYN (122 aa)). Aspartate 56 is modified (4-aspartylphosphate). The 253-residue stretch at 140–392 (ELPSVADVVR…QHFLDYCSGS (253 aa)) folds into the EAL domain. Glutamate 175, asparagine 233, glutamate 265, and aspartate 295 together coordinate Mg(2+). Residue glutamate 352 is the Proton acceptor of the active site.

In terms of assembly, homotetramer. Exhibits a highly unusual tetrameric structure arranged around a single dyad, with the four subunits adopting two distinctly different conformations, with only two active sites accessible for substrate binding. Interacts with RocS1. Mg(2+) is required as a cofactor.

It catalyses the reaction 3',3'-c-di-GMP + H2O = 5'-phosphoguanylyl(3'-&gt;5')guanosine + H(+). Phosphorylation of Asp-56 probably induces local conformational changes in the response regulatory domain. These structural changes are transmitted to the adjacent EAL domain, then the signal is further transmitted down to the active site. The phosphodiesterase activity is inhibited by Ca(2+) and Zn(2+). Phosphodiesterase activity is inhibited by a benzoisothiazolinone derivative that specifically inhibited RocR, but not some other phosphodiesterases. Functionally, phosphodiesterase (PDE) that catalyzes the hydrolysis of cyclic diguanylate (c-di-GMP) to 5'-pGpG. Cannot use cyclic AMP or cyclic GMP. Part of the RocSAR two-component regulatory signaling system (also known as the SadARS system), which regulates biofilm maturation, type III secretion and expression of the cup fimbrial-gene cluster. Negatively regulates the expression of cup genes by antagonizing the activity of RocA1. In Pseudomonas aeruginosa (strain ATCC 15692 / DSM 22644 / CIP 104116 / JCM 14847 / LMG 12228 / 1C / PRS 101 / PAO1), this protein is Cyclic di-GMP phosphodiesterase RocR.